The sequence spans 176 residues: Large ribosomal subunit protein uL10 (176 aa).

The protein belongs to the universal ribosomal protein uL10 family. Part of the ribosomal stalk of the 50S ribosomal subunit. The N-terminus interacts with L11 and the large rRNA to form the base of the stalk. The C-terminus forms an elongated spine to which L12 dimers bind in a sequential fashion forming a multimeric L10(L12)X complex.

Forms part of the ribosomal stalk, playing a central role in the interaction of the ribosome with GTP-bound translation factors. The protein is Large ribosomal subunit protein uL10 of Dehalococcoides mccartyi (strain ATCC BAA-2100 / JCM 16839 / KCTC 5957 / BAV1).